Consider the following 456-residue polypeptide: Antizyme inhibitor 2 (456 aa).

C357 (proton donor; shared with dimeric partner) is an active-site residue.

The protein belongs to the Orn/Lys/Arg decarboxylase class-II family. ODC antizyme inhibitor subfamily. Monomer. Interacts with OAZ1; this interaction disrupts the interaction between the antizyme and ODC1. Does not form a heterodimer with ODC1.

The protein resides in the nucleus. Its subcellular location is the cytoplasm. It localises to the perinuclear region. It is found in the membrane. The protein localises to the cytoplasmic vesicle. The protein resides in the endoplasmic reticulum-Golgi intermediate compartment. Its subcellular location is the golgi apparatus. It localises to the cis-Golgi network. It is found in the trans-Golgi network. The protein localises to the cytoplasmic granule. The protein resides in the cell projection. Its subcellular location is the axon. It localises to the dendrite. It is found in the perikaryon. Functionally, antizyme inhibitor (AZI) protein that positively regulates ornithine decarboxylase (ODC) activity and polyamine uptake. AZI is an enzymatically inactive ODC homolog that counteracts the negative effect of ODC antizyme (AZ) on ODC activity by competing with ODC for antizyme-binding. Inhibits antizyme-dependent ODC degradation and releases ODC monomers from their inactive complex with antizymes, leading to formation of the catalytically active ODC homodimer and restoring polyamine production. Participates in the morphological integrity of the trans-Golgi network (TGN) and functions as a regulator of intracellular secretory vesicle trafficking. The polypeptide is Antizyme inhibitor 2 (azin2) (Xenopus laevis (African clawed frog)).